Here is a 602-residue protein sequence, read N- to C-terminus: Pentatricopeptide repeat-containing protein At5g11310, mitochondrial (602 aa).

Residues 1–35 constitute a mitochondrion transit peptide; sequence MNSLFTAFRRNLLLNPNPHRNFFLHRLLSSSRRSS. PPR repeat units follow at residues 134-165, 172-202, 211-241, 249-283, 284-318, 319-353, 354-388, 389-423, 424-458, 459-493, and 494-528; these read SPSL…VRSD, SADT…ARSY, ELRL…IGGT, SVRI…NVKP, TVVT…EMEI, NFMV…ESGP, TIVT…GVDP, TTTT…GHSP, DRLT…GIDP, DLLT…GIIP, and QYIT…PHSK.

It belongs to the PPR family. P subfamily.

The protein localises to the mitochondrion. This chain is Pentatricopeptide repeat-containing protein At5g11310, mitochondrial, found in Arabidopsis thaliana (Mouse-ear cress).